Consider the following 235-residue polypeptide: Serine protease SplA (235 aa).

The N-terminal stretch at methionine 1–alanine 35 is a signal peptide. Residues histidine 74, aspartate 113, and serine 189 each act as charge relay system in the active site.

Belongs to the peptidase S1B family.

It is found in the secreted. In Staphylococcus aureus (strain MSSA476), this protein is Serine protease SplA (splA).